The chain runs to 198 residues: Beta-crystallin A1-1 (198 aa).

The interval 1–13 (MAQINPLPVPLGP) is N-terminal arm. Beta/gamma crystallin 'Greek key' domains lie at 14–53 (WKITVYDQENFQGKRMEFTSSCTNIMECGFDNIRSLKVEC) and 54–100 (GAWI…RPIC). Residues 101 to 106 (SANHKE) are connecting peptide. 2 consecutive Beta/gamma crystallin 'Greek key' domains span residues 107 to 148 (SKLV…KVQC) and 149 to 197 (GAWV…RRIQ).

Belongs to the beta/gamma-crystallin family. Homo/heterodimer, or complexes of higher-order. The structure of beta-crystallin oligomers seems to be stabilized through interactions between the N-terminal arms. In terms of processing, the N-terminus is blocked.

Functionally, crystallins are the dominant structural components of the vertebrate eye lens. This Aquarana catesbeiana (American bullfrog) protein is Beta-crystallin A1-1.